A 338-amino-acid chain; its full sequence is UPF0284 protein PAE0372 (338 aa).

It belongs to the UPF0284 family.

This Pyrobaculum aerophilum (strain ATCC 51768 / DSM 7523 / JCM 9630 / CIP 104966 / NBRC 100827 / IM2) protein is UPF0284 protein PAE0372.